The primary structure comprises 61 residues: Small ribosomal subunit protein bS21 (61 aa).

The interval 34-61 is disordered; it reads KREHYESPSVKRKKKSEAARKRKYKYNK. The segment covering 43–61 has biased composition (basic residues); that stretch reads VKRKKKSEAARKRKYKYNK.

Belongs to the bacterial ribosomal protein bS21 family.

The chain is Small ribosomal subunit protein bS21 from Thermoanaerobacter pseudethanolicus (strain ATCC 33223 / 39E) (Clostridium thermohydrosulfuricum).